We begin with the raw amino-acid sequence, 190 residues long: Acireductone dioxygenase (190 aa).

Fe(2+) is bound by residues H101, H103, E107, and H145. Residues H101, H103, E107, and H145 each coordinate Ni(2+).

Belongs to the acireductone dioxygenase (ARD) family. In terms of assembly, monomer. Fe(2+) serves as cofactor. It depends on Ni(2+) as a cofactor.

It catalyses the reaction 1,2-dihydroxy-5-(methylsulfanyl)pent-1-en-3-one + O2 = 3-(methylsulfanyl)propanoate + CO + formate + 2 H(+). The enzyme catalyses 1,2-dihydroxy-5-(methylsulfanyl)pent-1-en-3-one + O2 = 4-methylsulfanyl-2-oxobutanoate + formate + 2 H(+). It functions in the pathway amino-acid biosynthesis; L-methionine biosynthesis via salvage pathway; L-methionine from S-methyl-5-thio-alpha-D-ribose 1-phosphate: step 5/6. Functionally, catalyzes 2 different reactions between oxygen and the acireductone 1,2-dihydroxy-3-keto-5-methylthiopentene (DHK-MTPene) depending upon the metal bound in the active site. Fe-containing acireductone dioxygenase (Fe-ARD) produces formate and 2-keto-4-methylthiobutyrate (KMTB), the alpha-ketoacid precursor of methionine in the methionine recycle pathway. Ni-containing acireductone dioxygenase (Ni-ARD) produces methylthiopropionate, carbon monoxide and formate, and does not lie on the methionine recycle pathway. In Saccharopolyspora erythraea (strain ATCC 11635 / DSM 40517 / JCM 4748 / NBRC 13426 / NCIMB 8594 / NRRL 2338), this protein is Acireductone dioxygenase.